The following is a 171-amino-acid chain: Co-chaperone protein HscB homolog (171 aa).

Positions 2–74 (NYFELFGLPI…LRRAEYLLSL (73 aa)) constitute a J domain.

It belongs to the HscB family. Interacts with HscA and stimulates its ATPase activity.

In terms of biological role, co-chaperone involved in the maturation of iron-sulfur cluster-containing proteins. Seems to help targeting proteins to be folded toward HscA. This chain is Co-chaperone protein HscB homolog, found in Vibrio cholerae serotype O1 (strain ATCC 39541 / Classical Ogawa 395 / O395).